The sequence spans 614 residues: 1-deoxy-D-xylulose-5-phosphate synthase (614 aa).

Thiamine diphosphate-binding positions include H74 and 115–117 (GHS). D146 contacts Mg(2+). Thiamine diphosphate contacts are provided by residues 147–148 (GA), N175, Y282, and E363. A Mg(2+)-binding site is contributed by N175.

This sequence belongs to the transketolase family. DXPS subfamily. In terms of assembly, homodimer. It depends on Mg(2+) as a cofactor. Requires thiamine diphosphate as cofactor.

It catalyses the reaction D-glyceraldehyde 3-phosphate + pyruvate + H(+) = 1-deoxy-D-xylulose 5-phosphate + CO2. The protein operates within metabolic intermediate biosynthesis; 1-deoxy-D-xylulose 5-phosphate biosynthesis; 1-deoxy-D-xylulose 5-phosphate from D-glyceraldehyde 3-phosphate and pyruvate: step 1/1. Its function is as follows. Catalyzes the acyloin condensation reaction between C atoms 2 and 3 of pyruvate and glyceraldehyde 3-phosphate to yield 1-deoxy-D-xylulose-5-phosphate (DXP). This Methylobacillus flagellatus (strain ATCC 51484 / DSM 6875 / VKM B-1610 / KT) protein is 1-deoxy-D-xylulose-5-phosphate synthase.